A 194-amino-acid chain; its full sequence is Leucyl/phenylalanyl-tRNA--protein transferase (194 aa).

This sequence belongs to the L/F-transferase family.

It localises to the cytoplasm. It catalyses the reaction N-terminal L-lysyl-[protein] + L-leucyl-tRNA(Leu) = N-terminal L-leucyl-L-lysyl-[protein] + tRNA(Leu) + H(+). The catalysed reaction is N-terminal L-arginyl-[protein] + L-leucyl-tRNA(Leu) = N-terminal L-leucyl-L-arginyl-[protein] + tRNA(Leu) + H(+). The enzyme catalyses L-phenylalanyl-tRNA(Phe) + an N-terminal L-alpha-aminoacyl-[protein] = an N-terminal L-phenylalanyl-L-alpha-aminoacyl-[protein] + tRNA(Phe). Functions in the N-end rule pathway of protein degradation where it conjugates Leu, Phe and, less efficiently, Met from aminoacyl-tRNAs to the N-termini of proteins containing an N-terminal arginine or lysine. The protein is Leucyl/phenylalanyl-tRNA--protein transferase of Chlorobium luteolum (strain DSM 273 / BCRC 81028 / 2530) (Pelodictyon luteolum).